A 418-amino-acid chain; its full sequence is AA14 family lytic polysaccharide monooxygenase B (418 aa).

Positions 1-18 (MIPVFLAAVAAFLPLTSG) are cleaved as a signal peptide. 3 N-linked (GlcNAc...) asparagine glycosylation sites follow: Asn-31, Asn-94, and Asn-151. 4 disulfides stabilise this stretch: Cys-85–Cys-108, Cys-127–Cys-154, Cys-171–Cys-176, and Cys-178–Cys-200. N-linked (GlcNAc...) asparagine glycosylation is found at Asn-201 and Asn-235. Cys-220 and Cys-236 are disulfide-bonded. The span at 307 to 343 (AAATPAPSSSGSSPSSSSPGSSSTASTTSTSGPRPSA) shows a compositional bias: low complexity. Positions 307–364 (AAATPAPSSSGSSPSSSSPGSSSTASTTSTSGPRPSARGFRRSTGERPPTGVPTPRKS) are disordered.

It belongs to the polysaccharide monooxygenase AA14 family. Cu(2+) serves as cofactor.

The protein localises to the secreted. Its function is as follows. Lytic polysaccharide monooxygenase (LPMO) that oxidatively cleaves xylan with both C1 and C4 regioselectivity and that specifically targets the protective shield made by heteroxylans that cover cellulose microfibrils in wood. Catalysis by LPMOs requires the reduction of the active-site copper from Cu(II) to Cu(I) by a reducing agent and H(2)O(2) or O(2) as a cosubstrate. Cleavage occurs only when xylans are bound to cellulose and not when they are in solution. Increases the efficiency of wood saccharification through oxidative cleavage of highly refractory xylan-coated cellulose fibers via synergistic relationship with xylan-active enzymes, xylobiohydrolases and cellobiohydrolases. This is AA14 family lytic polysaccharide monooxygenase B from Trametes coccinea (strain BRFM310) (Pycnoporus coccineus).